The sequence spans 262 residues: Short-chain Z-isoprenyl diphosphate synthase (262 aa).

Residue D40 is part of the active site. D40 contributes to the Mg(2+) binding site. Substrate is bound by residues 41–44, W45, and 86–88; these read GNRR and STE. N89 functions as the Proton acceptor in the catalytic mechanism. Residues R92, R211, and 217–219 contribute to the substrate site; that span reads RLS. Mg(2+) is bound at residue E230.

This sequence belongs to the UPP synthase family. Z-FPP synthase subfamily. The cofactor is Mg(2+).

It carries out the reaction isopentenyl diphosphate + (2E)-geranyl diphosphate = (2Z,6E)-farnesyl diphosphate + diphosphate. It participates in phospholipid metabolism; decaprenyl phosphate biosynthesis. In terms of biological role, generates Z-farnesyl diphosphate (Z-FPP) from isopentenyl pyrophosphate (IPP). Z-FPP is the precursor of decaprenyl diphosphate, which has a central role in the biosynthesis of the mycobacterial cell wall. This Mycobacterium leprae (strain TN) protein is Short-chain Z-isoprenyl diphosphate synthase.